Here is a 317-residue protein sequence, read N- to C-terminus: Transaldolase A (317 aa).

The active-site Schiff-base intermediate with substrate is K132.

This sequence belongs to the transaldolase family. Type 1 subfamily. In terms of assembly, homodimer.

It localises to the cytoplasm. The enzyme catalyses D-sedoheptulose 7-phosphate + D-glyceraldehyde 3-phosphate = D-erythrose 4-phosphate + beta-D-fructose 6-phosphate. It participates in carbohydrate degradation; pentose phosphate pathway; D-glyceraldehyde 3-phosphate and beta-D-fructose 6-phosphate from D-ribose 5-phosphate and D-xylulose 5-phosphate (non-oxidative stage): step 2/3. Functionally, transaldolase is important for the balance of metabolites in the pentose-phosphate pathway. This chain is Transaldolase A (talA), found in Pasteurella multocida (strain Pm70).